Consider the following 268-residue polypeptide: MERYQQLFSQLAARHEGAFVPFVTLGDPNPTLSLRIIDTLIDAGADALELGIPFSDPLADGPTIQNANLRAFSSGVTPAHCFEMLATIRQKYPAIPIGLLMYANLVYNEGIDAFYAHCAEVGIDSVLVADVPLQESLPFRQAALRHNVAPIVICPPNSDDALLREIASHGRGYTYLLARAGVTGSEKRANTPLKHLIDTLKEYHAAPTLQGFGISEPGQVRTALHAGTAGAISGSAIVRIIEKHEDNPAVMLEQLAQFVRELKAATRG.

Residues E49 and D60 each act as proton acceptor in the active site.

Belongs to the TrpA family. Tetramer of two alpha and two beta chains.

The enzyme catalyses (1S,2R)-1-C-(indol-3-yl)glycerol 3-phosphate + L-serine = D-glyceraldehyde 3-phosphate + L-tryptophan + H2O. It functions in the pathway amino-acid biosynthesis; L-tryptophan biosynthesis; L-tryptophan from chorismate: step 5/5. In terms of biological role, the alpha subunit is responsible for the aldol cleavage of indoleglycerol phosphate to indole and glyceraldehyde 3-phosphate. The protein is Tryptophan synthase alpha chain of Sodalis glossinidius (strain morsitans).